Here is a 388-residue protein sequence, read N- to C-terminus: Succinate--CoA ligase [ADP-forming] subunit beta (388 aa).

In terms of domain architecture, ATP-grasp spans 9–244 (KQLFARYGLP…QSQEDPRAAQ (236 aa)). Residues lysine 46, 53–55 (GRG), glutamate 99, threonine 102, and glutamate 107 each bind ATP. Positions 199 and 213 each coordinate Mg(2+). Substrate is bound by residues asparagine 264 and 321–323 (GIV).

The protein belongs to the succinate/malate CoA ligase beta subunit family. In terms of assembly, heterotetramer of two alpha and two beta subunits. Mg(2+) serves as cofactor.

The enzyme catalyses succinate + ATP + CoA = succinyl-CoA + ADP + phosphate. The catalysed reaction is GTP + succinate + CoA = succinyl-CoA + GDP + phosphate. It functions in the pathway carbohydrate metabolism; tricarboxylic acid cycle; succinate from succinyl-CoA (ligase route): step 1/1. Functionally, succinyl-CoA synthetase functions in the citric acid cycle (TCA), coupling the hydrolysis of succinyl-CoA to the synthesis of either ATP or GTP and thus represents the only step of substrate-level phosphorylation in the TCA. The beta subunit provides nucleotide specificity of the enzyme and binds the substrate succinate, while the binding sites for coenzyme A and phosphate are found in the alpha subunit. The chain is Succinate--CoA ligase [ADP-forming] subunit beta from Shigella flexneri serotype 5b (strain 8401).